Consider the following 248-residue polypeptide: Triosephosphate isomerase (248 aa).

9–11 (NWK) lines the substrate pocket. The Electrophile role is filled by His94. Glu166 serves as the catalytic Proton acceptor. Residues Gly172, Ser212, and 233 to 234 (GG) each bind substrate.

It belongs to the triosephosphate isomerase family. Homodimer.

Its subcellular location is the cytoplasm. It catalyses the reaction D-glyceraldehyde 3-phosphate = dihydroxyacetone phosphate. It functions in the pathway carbohydrate biosynthesis; gluconeogenesis. Its pathway is carbohydrate degradation; glycolysis; D-glyceraldehyde 3-phosphate from glycerone phosphate: step 1/1. In terms of biological role, involved in the gluconeogenesis. Catalyzes stereospecifically the conversion of dihydroxyacetone phosphate (DHAP) to D-glyceraldehyde-3-phosphate (G3P). This chain is Triosephosphate isomerase, found in Thermoanaerobacter sp. (strain X514).